We begin with the raw amino-acid sequence, 259 residues long: Protein FAM220A (259 aa).

As to quaternary structure, interacts with transcriptional activator STAT3; the interaction occurs in both the nucleus and the cytoplasm, is enhanced by IL6 and promotes STAT3 dephosphorylation, leading to negative regulation of STAT3 transcriptional activator activity. Can interact with both unphosphorylated and phosphorylated STAT3 but interacts preferentially with phosphorylated STAT3 in the nucleus. Interacts with protein phosphatase PTPN2/TC45; this promotes interaction of PTPN2 with STAT3, leading to dephosphorylation of STAT3 by PTPN2.

Its subcellular location is the nucleus. It localises to the cytoplasm. The protein resides in the cytoplasmic vesicle. The protein localises to the secretory vesicle. It is found in the acrosome. Promotes dephosphorylation of transcriptional activator STAT3 by interacting with both STAT3 and protein phosphatase PTPN2. This promotes interaction of PTPN2 with STAT3 and mediates STAT3 dephosphorylation by PTPN2, leading to negative regulation of STAT3 transcriptional activator activity. May be required for spermiogenesis or sperm function. This chain is Protein FAM220A (FAM220A), found in Macaca fascicularis (Crab-eating macaque).